The sequence spans 359 residues: Membrane-bound lytic murein transglycosylase C (359 aa).

The first 16 residues, 1–16 (MKKYLALALIAPLLIS), serve as a signal peptide directing secretion. C17 is lipidated: N-palmitoyl cysteine. C17 carries S-diacylglycerol cysteine lipidation.

This sequence belongs to the transglycosylase Slt family.

It localises to the cell outer membrane. It carries out the reaction Exolytic cleavage of the (1-&gt;4)-beta-glycosidic linkage between N-acetylmuramic acid (MurNAc) and N-acetylglucosamine (GlcNAc) residues in peptidoglycan, from either the reducing or the non-reducing ends of the peptidoglycan chains, with concomitant formation of a 1,6-anhydrobond in the MurNAc residue.. Its function is as follows. Murein-degrading enzyme. May play a role in recycling of muropeptides during cell elongation and/or cell division. The polypeptide is Membrane-bound lytic murein transglycosylase C (Escherichia coli O81 (strain ED1a)).